The primary structure comprises 140 residues: Desampylase (140 aa).

An MPN domain is found at 13–133 (TLIIPQHYLR…WILSEKNKIS (121 aa)). Residue glutamate 34 is the Proton donor/acceptor of the active site. Zn(2+)-binding residues include histidine 88, histidine 90, and aspartate 101. The short motif at 88–101 (HSHIACPPIPSGKD) is the JAMM motif element.

Belongs to the peptidase M67B family. As to quaternary structure, exists in two major states: monomer and homodimer. Both conformational states are catalytically active. Zn(2+) is required as a cofactor. Post-translationally, the disulfide bridge probably stabilizes the PfJAMM1 homodimer at the optimal growth temperature of the hyperthermophile.

The catalysed reaction is an N(6)-[small archaeal modifier protein]-[protein]-L-lysine + H2O = a [protein]-L-lysine + a [small archaeal modifier protein].. Inhibited by EDTA in vitro. In terms of biological role, metalloprotease that displays desampylase (DSAMP) activity, cleaving ubiquitin-like small archaeal modifier proteins (SAMP1, SAMP2 and SAMP3) from protein conjugates (isopeptide- and linear-linked). Thus, likely regulates sampylation and the pools of 'free' SAMP available for protein modification. In vitro, is also able to cleave non-physiological ubiquitin (Ub) substrates, such as 'Met1-', 'Lys48-', and 'Lys63'-linked Ub dimers (Ub2), and to remove Ub tags from diverse proteins. The sequence is that of Desampylase from Pyrococcus furiosus (strain ATCC 43587 / DSM 3638 / JCM 8422 / Vc1).